A 424-amino-acid chain; its full sequence is Hydrolase ORFZ (424 aa).

Residue S243 is the Nucleophile of the active site.

Belongs to the AB hydrolase superfamily. FUS2 hydrolase family. As to quaternary structure, homodimer.

Its pathway is secondary metabolite biosynthesis. In terms of biological role, hydrolyase; part of the gene cluster that mediates the biosynthesis of a tyrosine-derived cytochalasan acting as a fungal signal recognized by resistant rice plants and leads to avirulence in Pi33 resistant rice cultivars. The first step in the pathway is catalyzed by the hybrid PKS-NRPS ACE1, assisted by the enoyl reductase RAP1, that are responsible for fusion of the tyrosine precursor and the polyketide backbone. The polyketide synthase module (PKS) of ACE1 is responsible for the synthesis of the polyketide backbone and the downstream nonribosomal peptide synthetase (NRPS) amidates the carboxyl end of the polyketide with the tyrosine precursor. Because ACE1 lacks a designated enoylreductase (ER) domain, the required activity is provided the enoyl reductase RAP1. Reduction by the hydrolyase ORFZ, followed by dehydration and intra-molecular Diels-Alder cyclization by the Diels-Alderase ORF3 then yield the required isoindolone-fused macrocycle. A number of oxidative steps catalyzed by the tailoring enzymes identified within the cluster, including cytochrome P450 monooxygenases CYP1 to CYP4, the FAD-linked oxidoreductase OXR2 and the short-chain dehydrogenase/reductase OXR1, are further required to afford the final cytochalasans that confer avirulence and which have still to be identified. The monooxygenase CYP1 has been shown to be a site-selective C-18 hydroxylase whereas the function of CYP3 is the site-selective epoxidation of the C-6/C-7 olefin that is present in some intermediate compounds. Finally, SYN2 and RAP2 are not required for avirulence in Pi33 resistant rice cultivars. The protein is Hydrolase ORFZ of Pyricularia oryzae (strain 70-15 / ATCC MYA-4617 / FGSC 8958) (Rice blast fungus).